An 89-amino-acid polypeptide reads, in one-letter code: UPF0335 protein Caul_0876 (89 aa).

The protein belongs to the UPF0335 family.

The chain is UPF0335 protein Caul_0876 from Caulobacter sp. (strain K31).